The chain runs to 156 residues: MTIHTDTRPTLNLIRLAHGRGLDLPAYETKGAAGMDLRAAIEDGTTLTLAPGKRALVPSGFIFEIPEGFEAQIRPRSGLAFKNGITCLNSPGTVDSDYRGEVKVLLINHGDEPFEITRGMRIAQVVIAPVTQVRVAEITEVSDTARGAGGFGSTGV.

Substrate contacts are provided by residues 76-78 (RSG), Asn-89, 93-95 (TVD), and Lys-103.

It belongs to the dUTPase family. The cofactor is Mg(2+).

The enzyme catalyses dUTP + H2O = dUMP + diphosphate + H(+). It participates in pyrimidine metabolism; dUMP biosynthesis; dUMP from dCTP (dUTP route): step 2/2. This enzyme is involved in nucleotide metabolism: it produces dUMP, the immediate precursor of thymidine nucleotides and it decreases the intracellular concentration of dUTP so that uracil cannot be incorporated into DNA. The polypeptide is Deoxyuridine 5'-triphosphate nucleotidohydrolase (Rhizobium rhizogenes (strain K84 / ATCC BAA-868) (Agrobacterium radiobacter)).